A 152-amino-acid chain; its full sequence is Lipoprotein signal peptidase (152 aa).

3 helical membrane-spanning segments follow: residues 5 to 25 (LFVL…FWIV), 61 to 81 (WFFV…LATH), and 84 to 104 (LNIW…GNFI). Catalysis depends on residues Asp114 and Asp130. Residues 125 to 145 (IFNVADSYLTVGVILLVICLW) traverse the membrane as a helical segment.

Belongs to the peptidase A8 family.

Its subcellular location is the cell membrane. The catalysed reaction is Release of signal peptides from bacterial membrane prolipoproteins. Hydrolyzes -Xaa-Yaa-Zaa-|-(S,diacylglyceryl)Cys-, in which Xaa is hydrophobic (preferably Leu), and Yaa (Ala or Ser) and Zaa (Gly or Ala) have small, neutral side chains.. It functions in the pathway protein modification; lipoprotein biosynthesis (signal peptide cleavage). This protein specifically catalyzes the removal of signal peptides from prolipoproteins. This Streptococcus pyogenes serotype M18 (strain MGAS8232) protein is Lipoprotein signal peptidase.